Reading from the N-terminus, the 555-residue chain is MTRNDPSRTIAAPTGTTLNAKSWQTEAPLRMLMNNLHPDVAERPQELVVYGGIGRAARDWESFDAIVETLKRLDDDQTLLVQSGKPVGVFRTHADAPRVLIANSNLVPRWANWDHFNELDKKGLAMYGQMTAGSWIYIGAQGIVQGTYETFVEMGRQHFGGDLTGKWLFTGGLGGMGGAQPLAAVMAGASCLAVECRKSSIDMRLRTGYLDTWTDNLDEALRLIDESCKAGTPKSVGLLGNVADVLAELLKRGVKPDLLTDQTSAHDPVNGYLPQGWTVEQWDDKRVSAPKEVEKAARASMANHIRAMLGFHALGVPTVDYGNNLRQMALEEGVENAFDFPGFVPAYIRPLFCRGIGPFRWAALSGDPEDIAKTDAKVKELIPDNPHLHRWLDMAAEKIKFQGLPARICWVGLGDRDRLGQAFNEMVANGELKAPVVIGRDHLDSGSVASPNRETEAMADGSDAVSDWPLLNALLNTASGATWVSLHHGGGVGMGFSQHAGMVIVCDGTEAAAKRIGRVLWNDPATGVMRHADAGYEIAIDCAKEKGLDLPGILG.

NAD(+) is bound by residues 51 to 52 (GG), glutamine 129, 175 to 177 (GMG), glutamate 195, 262 to 266 (QTSAH), 272 to 273 (YL), and tyrosine 321. Cysteine 409 is a catalytic residue. Glycine 491 contacts NAD(+).

Belongs to the urocanase family. Requires NAD(+) as cofactor.

It localises to the cytoplasm. It catalyses the reaction 4-imidazolone-5-propanoate = trans-urocanate + H2O. It functions in the pathway amino-acid degradation; L-histidine degradation into L-glutamate; N-formimidoyl-L-glutamate from L-histidine: step 2/3. Functionally, catalyzes the conversion of urocanate to 4-imidazolone-5-propionate. In Stenotrophomonas maltophilia (strain R551-3), this protein is Urocanate hydratase.